We begin with the raw amino-acid sequence, 151 residues long: Cytochrome c-type biogenesis protein CcmE 2 (151 aa).

Residues 1–8 (MNPLRKKR) are Cytoplasmic-facing. A helical; Signal-anchor for type II membrane protein transmembrane segment spans residues 9–29 (LVIILAILVGVGAAVGLALSA). Residues 30–151 (LQQNINLFYT…QSAPAPGKEG (122 aa)) are Periplasmic-facing. Residues histidine 124 and tyrosine 128 each coordinate heme.

The protein belongs to the CcmE/CycJ family.

The protein localises to the cell inner membrane. Heme chaperone required for the biogenesis of c-type cytochromes. Transiently binds heme delivered by CcmC and transfers the heme to apo-cytochromes in a process facilitated by CcmF and CcmH. The sequence is that of Cytochrome c-type biogenesis protein CcmE 2 from Pseudomonas fluorescens (strain Pf0-1).